An 85-amino-acid chain; its full sequence is U4-theraphotoxin-Hhn1c (85 aa).

An N-terminal signal peptide occupies residues 1–22 (MKVTLIAILTCAAVLVLHTTAA). A propeptide spanning residues 23–48 (EELEAESQLMEVGMPDTELAAVDEER) is cleaved from the precursor. Intrachain disulfides connect C52–C66, C56–C77, and C71–C82.

The protein belongs to the neurotoxin 12 (Hwtx-2) family. 02 (Hwtx-2) subfamily. As to expression, expressed by the venom gland.

The protein resides in the secreted. Postsynaptic neurotoxin. The sequence is that of U4-theraphotoxin-Hhn1c from Cyriopagopus hainanus (Chinese bird spider).